Reading from the N-terminus, the 823-residue chain is NAD-dependent histone deacetylase sirtuin-1 (823 aa).

A compositionally biased stretch (low complexity) spans 41–67 (LASTSTEAEAEAEATATTTEPATSELA). The segment at 41–146 (LASTSTEAEA…SSSNCSSSVE (106 aa)) is disordered. Over residues 72–95 (GEIKTKTLAAREEQEIGANLEHKT) the composition is skewed to basic and acidic residues. Acidic residues predominate over residues 104-137 (EDEDDEEEEEEDDEEEEEDDEEGITGTSNEDEDS). In terms of domain architecture, Deacetylase sirtuin-type spans 204–499 (KLASVNTFDD…LCCDESVLTE (296 aa)). NAD(+) contacts are provided by residues 229–248 (GAGV…NGIY) and 313–316 (QNID). Histidine 331 serves as the catalytic Proton acceptor. 4 residues coordinate Zn(2+): cysteine 339, cysteine 342, cysteine 363, and cysteine 366. NAD(+) contacts are provided by residues 427–429 (GSS), 452–454 (NRE), and serine 469. Phosphoserine is present on residues serine 618 and serine 621. Residues 698–707 (DYSDDDDEEE) show a composition bias toward acidic residues. 2 disordered regions span residues 698–722 (DYSD…GNVG) and 777–823 (IIEQ…LAAV). The span at 798 to 813 (PSEENKQQTQIERSEE) shows a compositional bias: basic and acidic residues. Residues 814–823 (SPPPGQLAAV) are compositionally biased toward pro residues.

The protein belongs to the sirtuin family. Class I subfamily. In terms of assembly, interacts with the transcriptional repressors hairy (hry) and deadpan (dpn); via basic domains. Associates with the Esc/E(z) histone methyltransferase complex. Interacts directly with E(z) and HDAC1/Rpd3. Zn(2+) serves as cofactor.

It is found in the cytoplasm. The protein localises to the nucleus. Its subcellular location is the chromosome. The catalysed reaction is N(6)-acetyl-L-lysyl-[protein] + NAD(+) + H2O = 2''-O-acetyl-ADP-D-ribose + nicotinamide + L-lysyl-[protein]. Its function is as follows. NAD-dependent histone deacetylase involved in heterochromatic silencing. Mildly suppresses the heterochromatin-mediated silencing phenomenon known as position-effect variegation (PEV). Required for epigenetic silencing of the polycomb group proteins. Has histone H4 deacetylase activity in vitro. Required maternally for establishing proper segmentation of the embryo. Involved in sex determination. May be involved in the regulation of life span. This Drosophila melanogaster (Fruit fly) protein is NAD-dependent histone deacetylase sirtuin-1.